Here is a 217-residue protein sequence, read N- to C-terminus: Chorionic somatomammotropin hormone 2 (217 aa).

Residues methionine 1–alanine 26 form the signal peptide. Histidine 44 lines the Zn(2+) pocket. A disulfide bridge links cysteine 79 with cysteine 191. Residue glutamate 200 coordinates Zn(2+). The cysteines at positions 208 and 215 are disulfide-linked.

It belongs to the somatotropin/prolactin family. Can be found in a monomeric as well as dimeric form.

The protein resides in the secreted. Its function is as follows. Produced only during pregnancy and is involved in stimulating lactation, fetal growth and metabolism. Does not interact with GHR but only activates PRLR through zinc-induced dimerization. The protein is Chorionic somatomammotropin hormone 2 (CSH2) of Homo sapiens (Human).